Here is a 170-residue protein sequence, read N- to C-terminus: Bifunctional protein PyrR (170 aa).

Residues 90–102 carry the PRPP-binding motif; the sequence is LVLIDDVLMSGRT.

Belongs to the purine/pyrimidine phosphoribosyltransferase family. PyrR subfamily.

The enzyme catalyses UMP + diphosphate = 5-phospho-alpha-D-ribose 1-diphosphate + uracil. Functionally, regulates the transcription of the pyrimidine nucleotide (pyr) operon in response to exogenous pyrimidines. In terms of biological role, also displays a weak uracil phosphoribosyltransferase activity which is not physiologically significant. In Pseudomonas syringae pv. tomato (strain ATCC BAA-871 / DC3000), this protein is Bifunctional protein PyrR.